Reading from the N-terminus, the 330-residue chain is Ferredoxin--NADP reductase (330 aa).

FAD contacts are provided by Glu-35, Gln-43, Tyr-48, Val-90, Phe-123, Asp-285, and Thr-326.

Belongs to the ferredoxin--NADP reductase type 2 family. In terms of assembly, homodimer. FAD serves as cofactor.

It catalyses the reaction 2 reduced [2Fe-2S]-[ferredoxin] + NADP(+) + H(+) = 2 oxidized [2Fe-2S]-[ferredoxin] + NADPH. This is Ferredoxin--NADP reductase from Streptococcus pyogenes serotype M3 (strain ATCC BAA-595 / MGAS315).